The following is a 479-amino-acid chain: Aspartyl/glutamyl-tRNA(Asn/Gln) amidotransferase subunit B (479 aa).

It belongs to the GatB/GatE family. GatB subfamily. As to quaternary structure, heterotrimer of A, B and C subunits.

It catalyses the reaction L-glutamyl-tRNA(Gln) + L-glutamine + ATP + H2O = L-glutaminyl-tRNA(Gln) + L-glutamate + ADP + phosphate + H(+). It carries out the reaction L-aspartyl-tRNA(Asn) + L-glutamine + ATP + H2O = L-asparaginyl-tRNA(Asn) + L-glutamate + ADP + phosphate + 2 H(+). In terms of biological role, allows the formation of correctly charged Asn-tRNA(Asn) or Gln-tRNA(Gln) through the transamidation of misacylated Asp-tRNA(Asn) or Glu-tRNA(Gln) in organisms which lack either or both of asparaginyl-tRNA or glutaminyl-tRNA synthetases. The reaction takes place in the presence of glutamine and ATP through an activated phospho-Asp-tRNA(Asn) or phospho-Glu-tRNA(Gln). This is Aspartyl/glutamyl-tRNA(Asn/Gln) amidotransferase subunit B from Mycoplasma mycoides subsp. mycoides SC (strain CCUG 32753 / NCTC 10114 / PG1).